Reading from the N-terminus, the 397-residue chain is MDMDQQLKTILRGSAEFIDEEELKKKLAKGRPLRVKAGFDPTAPDLHLGHTVLIHKLRHFQELGHTVIFLIGDFTGMIGDPSGRSETRPPLTREQVLQNAETYKKQVFKILDPEKTEVRFNSEWMDKFGAADFIRLASRYTVARMLERDDFEKRYRSNMTISIHEFLYPLVQGYDSVALEADVELGGTDQKFNLLVGRHLQSQEGQEPQCVLTVPILEGLDGVKKMSKSLGNYVGIDEPPADMFGKLMSVSDELMWRYYELITTKTLDEIAELQRRVASGELHPKTAKEELAEHITAQYHGSDKAAEARQGFNAVFAQGCVPDDMPEFSCSCGEDSTPPAFLADSGLAGSRGEAKRLIKQGALSLDGEKLDDPNTPLTAGEYVVRLGKKRFLRLIVR.

A 'HIGH' region motif is present at residues 41 to 50 (PTAPDLHLGH). The short motif at 225-229 (KMSKS) is the 'KMSKS' region element. Lys228 contacts ATP. Residues 340–396 (AFLADSGLAGSRGEAKRLIKQGALSLDGEKLDDPNTPLTAGEYVVRLGKKRFLRLIV) enclose the S4 RNA-binding domain.

The protein belongs to the class-I aminoacyl-tRNA synthetase family. TyrS type 2 subfamily. In terms of assembly, homodimer.

Its subcellular location is the cytoplasm. It catalyses the reaction tRNA(Tyr) + L-tyrosine + ATP = L-tyrosyl-tRNA(Tyr) + AMP + diphosphate + H(+). Its function is as follows. Catalyzes the attachment of tyrosine to tRNA(Tyr) in a two-step reaction: tyrosine is first activated by ATP to form Tyr-AMP and then transferred to the acceptor end of tRNA(Tyr). This Oleidesulfovibrio alaskensis (strain ATCC BAA-1058 / DSM 17464 / G20) (Desulfovibrio alaskensis) protein is Tyrosine--tRNA ligase.